Here is a 432-residue protein sequence, read N- to C-terminus: 3-phosphoshikimate 1-carboxyvinyltransferase (432 aa).

3 residues coordinate 3-phosphoshikimate: Lys-22, Ser-23, and Arg-27. Lys-22 contributes to the phosphoenolpyruvate binding site. Residues Gly-96 and Arg-127 each contribute to the phosphoenolpyruvate site. 7 residues coordinate 3-phosphoshikimate: Ser-173, Ser-174, Gln-175, Ser-201, Asp-316, Asn-339, and Lys-343. Residue Gln-175 coordinates phosphoenolpyruvate. Asp-316 functions as the Proton acceptor in the catalytic mechanism. 3 residues coordinate phosphoenolpyruvate: Arg-347, Arg-391, and Lys-416.

The protein belongs to the EPSP synthase family. In terms of assembly, monomer.

It localises to the cytoplasm. The catalysed reaction is 3-phosphoshikimate + phosphoenolpyruvate = 5-O-(1-carboxyvinyl)-3-phosphoshikimate + phosphate. It participates in metabolic intermediate biosynthesis; chorismate biosynthesis; chorismate from D-erythrose 4-phosphate and phosphoenolpyruvate: step 6/7. In terms of biological role, catalyzes the transfer of the enolpyruvyl moiety of phosphoenolpyruvate (PEP) to the 5-hydroxyl of shikimate-3-phosphate (S3P) to produce enolpyruvyl shikimate-3-phosphate and inorganic phosphate. This chain is 3-phosphoshikimate 1-carboxyvinyltransferase, found in Haemophilus influenzae (strain PittGG).